The chain runs to 154 residues: Endoribonuclease YbeY (154 aa).

Residues histidine 114, histidine 118, and histidine 124 each coordinate Zn(2+).

The protein belongs to the endoribonuclease YbeY family. Zn(2+) is required as a cofactor.

It localises to the cytoplasm. Single strand-specific metallo-endoribonuclease involved in late-stage 70S ribosome quality control and in maturation of the 3' terminus of the 16S rRNA. This is Endoribonuclease YbeY from Haemophilus influenzae (strain 86-028NP).